The primary structure comprises 585 residues: Zinc finger protein Eos (585 aa).

Disordered stretches follow at residues 1–43 (MHTP…PDFL) and 68–98 (EKEFLGAPVGPSVSTPNSQHSSPSRSLSANS). The segment covering 25–34 (QGKDNLERDP) has biased composition (basic and acidic residues). Residues 79–98 (SVSTPNSQHSSPSRSLSANS) show a composition bias toward polar residues. A Glycyl lysine isopeptide (Lys-Gly) (interchain with G-Cter in SUMO2) cross-link involves residue Lys100. Ser105 is subject to Phosphoserine. 4 consecutive C2H2-type zinc fingers follow at residues 159 to 181 (LKCDVCGMVCIGPNVLMVHKRSH), 187 to 209 (FHCNQCGASFTQKGNLLRHIKLH), 215 to 237 (FKCPFCNYACRRRDALTGHLRTH), and 248 to 271 (YKCNYCGRSYKQQSTLEEHKERCH). The interaction with FOXP3 stretch occupies residues 281 to 585 (AQALAGQPGD…HIVRGEHKVG (305 aa)). N6-acetyllysine is present on Lys335. Residues 410 to 489 (PGRLELPGSR…QPPPTIVVGR (80 aa)) are disordered. The short motif at 425-429 (PEDLA) is the CTBP-binding motif PEDLA element. Over residues 475–484 (QGPPPQPPPT) the composition is skewed to pro residues. Lys500 participates in a covalent cross-link: Glycyl lysine isopeptide (Lys-Gly) (interchain with G-Cter in SUMO2). 2 C2H2-type zinc fingers span residues 530 to 552 (FKCEHCRILFLDHVMFTIHMGCH) and 558 to 582 (FECNICGYHSQDRYEFSSHIVRGEH).

It belongs to the Ikaros C2H2-type zinc-finger protein family. Self-associates. Interacts with other family members; IKZF1, IKZF2, IKZF3 and IKZF5. Interacts with CTBP2. Interacts with SPI1, MITF, FOXP3 and CTBP1. Highly expressed in skeletal muscle, low levels of expression in heart, thymus, kidney, liver, and spleen. Expressed in the hematopoietic cell lines MOLT-4, NALM-6 and K-562. Highly expressed in THP-1 and M-07e cell lines, which have characteristics of myeloid and early megakaryocytic cells respectively.

The protein localises to the nucleus. DNA-binding protein that binds to the 5'GGGAATRCC-3' Ikaros-binding sequence. Transcriptional repressor. Interacts with SPI1 and MITF to repress transcription of the CTSK and ACP5 promoters via recruitment of corepressors SIN3A and CTBP2. May be involved in the development of central and peripheral nervous systems. Essential for the inhibitory function of regulatory T-cells (Treg). Mediates FOXP3-mediated gene silencing in regulatory T-cells (Treg) via recruitment of corepressor CTBP1. In Homo sapiens (Human), this protein is Zinc finger protein Eos (IKZF4).